The sequence spans 332 residues: Galactosylgalactosylxylosylprotein 3-beta-glucuronosyltransferase 1 (332 aa).

Topologically, residues 1–6 (MPKRRD) are cytoplasmic. The tract at residues 3–5 (KRR) is essential for transport from endoplasmic reticulum to Golgi apparatus and interaction with SAR1A. Residues 7–27 (ILAIVLIVLPWTLLITVWHQS) traverse the membrane as a helical; Signal-anchor for type II membrane protein segment. The Lumenal portion of the chain corresponds to 28 to 332 (TLAPLLAVHK…KGFTDPSVEI (305 aa)). A UDP-alpha-D-glucuronate-binding site is contributed by 91–93 (PTY). 2 positions are modified to phosphothreonine: Thr-103 and Thr-108. Asp-122 contacts UDP-alpha-D-glucuronate. Asn-140 carries N-linked (GlcNAc...) asparagine glycosylation. Residues Arg-165 and Arg-170 each coordinate UDP-alpha-D-glucuronate. Residue Asn-184 is glycosylated (N-linked (GlcNAc...) asparagine). 195–197 (DDD) is a binding site for UDP-alpha-D-glucuronate. Asp-197 provides a ligand contact to Mn(2+). The tract at residues 243-252 (FDPHRPFAID) is interaction with galactose moiety of substrate glycoprotein. Residue Glu-282 is the Proton donor/acceptor of the active site. Asn-301 carries N-linked (GlcNAc...) asparagine glycosylation. Residue 309–311 (HTR) coordinates UDP-alpha-D-glucuronate.

The protein belongs to the glycosyltransferase 43 family. Homodimer. Interacts with SAR1A. Requires Mn(2+) as cofactor. The soluble form derives from the membrane form by proteolytic processing.

It is found in the golgi apparatus membrane. The protein localises to the secreted. It catalyses the reaction 3-O-(beta-D-galactosyl-(1-&gt;3)-beta-D-galactosyl-(1-&gt;4)-beta-D-xylosyl)-L-seryl-[protein] + UDP-alpha-D-glucuronate = 3-O-(beta-D-GlcA-(1-&gt;3)-beta-D-Gal-(1-&gt;3)-beta-D-Gal-(1-&gt;4)-beta-D-Xyl)-L-seryl-[protein] + UDP + H(+). It functions in the pathway protein modification; protein glycosylation. In terms of biological role, involved in the biosynthesis of L2/HNK-1 carbohydrate epitope on glycoproteins. Can also play a role in glycosaminoglycan biosynthesis. Substrates include asialo-orosomucoid (ASOR), asialo-fetuin, and asialo-neural cell adhesion molecule. Requires sphingomyelin for activity: stearoyl-sphingomyelin was the most effective, followed by palmitoyl-sphingomyelin and lignoceroyl-sphingomyelin. Activity was demonstrated only for sphingomyelin with a saturated fatty acid and not for that with an unsaturated fatty acid, regardless of the length of the acyl group. The protein is Galactosylgalactosylxylosylprotein 3-beta-glucuronosyltransferase 1 of Pan troglodytes (Chimpanzee).